Consider the following 503-residue polypeptide: WD repeat-containing protein 55 homolog (503 aa).

2 disordered regions span residues 1–21 (MHTH…DLDD) and 35–132 (ALVG…DDLD). Composition is skewed to acidic residues over residues 12–21 (DADELDDLDD), 40–50 (DVSDSDIDEHD), and 78–96 (NAED…DEAE). WD repeat units follow at residues 157-196 (KLED…NKLL), 201-242 (VHSK…KLYE), 244-282 (AHDD…PIFE), 285-324 (EVED…LYVQ), 327-366 (PYEE…YHCD), and 411-450 (QHNM…DFGD). Positions 483–503 (TKEDEDNADNNDAAAGPSNSA) are disordered.

It belongs to the WD repeat WDR55 family.

This Drosophila persimilis (Fruit fly) protein is WD repeat-containing protein 55 homolog.